We begin with the raw amino-acid sequence, 248 residues long: PF03932 family protein CutC (248 aa).

Belongs to the CutC family. As to quaternary structure, homodimer.

It localises to the cytoplasm. The sequence is that of PF03932 family protein CutC from Salmonella enteritidis PT4 (strain P125109).